The sequence spans 442 residues: GTPase Obg (442 aa).

The Obg domain maps to 1–158 (MFYDQARIFV…HWLELELKLL (158 aa)). Positions 159–329 (ADVGLVGFPN…LIYHVHKGLE (171 aa)) constitute an OBG-type G domain. GTP contacts are provided by residues 165 to 172 (GFPNVGKS), 190 to 194 (FTTLE), 212 to 215 (DIPG), 282 to 285 (NKMD), and 310 to 312 (SAA). Mg(2+) is bound by residues Ser-172 and Thr-192. Residues 349 to 427 (FTGKTEERFK…IGDLDFDFIE (79 aa)) form the OCT domain.

This sequence belongs to the TRAFAC class OBG-HflX-like GTPase superfamily. OBG GTPase family. In terms of assembly, monomer. Requires Mg(2+) as cofactor.

The protein localises to the cytoplasm. Its function is as follows. An essential GTPase which binds GTP, GDP and possibly (p)ppGpp with moderate affinity, with high nucleotide exchange rates and a fairly low GTP hydrolysis rate. Plays a role in control of the cell cycle, stress response, ribosome biogenesis and in those bacteria that undergo differentiation, in morphogenesis control. In Heliobacterium modesticaldum (strain ATCC 51547 / Ice1), this protein is GTPase Obg.